The sequence spans 592 residues: Coronatine-insensitive protein 1 (592 aa).

The region spanning 16–57 (TVDDVIEQVMTYITDPKDRDSASLVCRRWFKIDSETREHVTM) is the F-box domain. 18 LRR repeats span residues 58–82 (ALCY…KLKG), 83–102 (KPRA…YVTP), 103–120 (WVTE…VHFR), 121–154 (RMIV…FTTD), 155–182 (GLLS…KDGK), 183–210 (WLHE…ISPK), 211–236 (DLET…LELV), 237–264 (GFFK…EKYM), 265–283 (NLVF…MGPN), 284–308 (EMPI…LETE), 309–332 (DHCT…IGDR), 333–368 (GLEV…VSQR), 369–393 (GLIA…ITNE), 394–426 (SLES…PLDN), 427–456 (GVRS…LGLS), 457–478 (YIGQ…ESDE), 479–500 (GLME…GCCF), and 501–524 (SERA…QGYR). Residue R85 participates in jasmonate binding. 3 residues coordinate jasmonate: R348, Y386, and R409. R496 is a binding site for jasmonate.

In terms of assembly, component of SCF(COI1) E3 ubiquitin ligase complexes at least composed of ASK1 or ASK2, CUL1, RBX1A or RBX1B and COI1. Interacts with ASK1 and ASK2, but separately. Also binds to ASK11 and ASK12. Interacts with RBCS-1B and HDA6. SCF complexes interact with the COP9 signalosome (CSN). Interacts with TIFY10A.

It participates in protein modification; protein ubiquitination. In terms of biological role, required for jasmonate-regulated plant fertility and defense processes, and for coronatine and/or other elicitors perceptions/responses. Seems to not be required for meiosis. Required for the regulation of some genes induced by wounding, but not for all. Component of SCF(COI1) E3 ubiquitin ligase complexes, which may mediate the ubiquitination and subsequent proteasomal degradation of target proteins (probably including the ribulose bisphosphate carboxylase small chain 1B RBCS-1B and the histone deacetylase HDA6). These SCF complexes play crucial roles in regulating response to jasmonate, and their interactions with the COP9 signalosome (CSN) appear to be important for their activity. Interacts with TIFY10A and inositol pentakisphosphate to form a high-affinity jasmonates coreceptor. Involved in the regulation of plant gene expression during plant-pathogen interactions with Pseudomonas syringae and Alternaria brassicicola. The sequence is that of Coronatine-insensitive protein 1 (COI1) from Arabidopsis thaliana (Mouse-ear cress).